A 776-amino-acid polypeptide reads, in one-letter code: 5-methyltetrahydropteroyltriglutamate--homocysteine methyltransferase (776 aa).

Residues 16–19 and Lys112 contribute to the 5-methyltetrahydropteroyltri-L-glutamate site; that span reads RELK. L-homocysteine is bound by residues 435–437 and Glu488; that span reads IGS. L-methionine-binding positions include 435 to 437 and Glu488; that span reads IGS. Residues 519-520 and Trp565 each bind 5-methyltetrahydropteroyltri-L-glutamate; that span reads RC. Asp603 contacts L-homocysteine. Asp603 contacts L-methionine. Glu609 lines the 5-methyltetrahydropteroyltri-L-glutamate pocket. His645, Cys647, and Glu669 together coordinate Zn(2+). Residue His698 is the Proton donor of the active site. Zn(2+) is bound at residue Cys730.

The protein belongs to the vitamin-B12 independent methionine synthase family. Requires Zn(2+) as cofactor.

The catalysed reaction is 5-methyltetrahydropteroyltri-L-glutamate + L-homocysteine = tetrahydropteroyltri-L-glutamate + L-methionine. It participates in amino-acid biosynthesis; L-methionine biosynthesis via de novo pathway; L-methionine from L-homocysteine (MetE route): step 1/1. Functionally, catalyzes the transfer of a methyl group from 5-methyltetrahydrofolate to homocysteine resulting in methionine formation. The polypeptide is 5-methyltetrahydropteroyltriglutamate--homocysteine methyltransferase (Ralstonia pickettii (strain 12J)).